The chain runs to 101 residues: Phosphoribosyl-AMP cyclohydrolase (101 aa).

A Mg(2+)-binding site is contributed by Asp71. Cys72 is a Zn(2+) binding site. Mg(2+) contacts are provided by Asp73 and Asp75. Cys88 and Cys95 together coordinate Zn(2+).

Belongs to the PRA-CH family. As to quaternary structure, homodimer. Mg(2+) serves as cofactor. It depends on Zn(2+) as a cofactor.

It is found in the cytoplasm. It carries out the reaction 1-(5-phospho-beta-D-ribosyl)-5'-AMP + H2O = 1-(5-phospho-beta-D-ribosyl)-5-[(5-phospho-beta-D-ribosylamino)methylideneamino]imidazole-4-carboxamide. It participates in amino-acid biosynthesis; L-histidine biosynthesis; L-histidine from 5-phospho-alpha-D-ribose 1-diphosphate: step 3/9. Functionally, catalyzes the hydrolysis of the adenine ring of phosphoribosyl-AMP. The chain is Phosphoribosyl-AMP cyclohydrolase from Bacillus cereus (strain 03BB102).